A 154-amino-acid polypeptide reads, in one-letter code: Ribonuclease H (154 aa).

One can recognise an RNase H type-1 domain in the interval 1 to 142; it reads MRKQVEIFTD…CDELARAAAS (142 aa). Residues aspartate 10, glutamate 48, aspartate 70, and aspartate 134 each coordinate Mg(2+).

The protein belongs to the RNase H family. In terms of assembly, monomer. Requires Mg(2+) as cofactor.

It localises to the cytoplasm. It catalyses the reaction Endonucleolytic cleavage to 5'-phosphomonoester.. Functionally, endonuclease that specifically degrades the RNA of RNA-DNA hybrids. The sequence is that of Ribonuclease H from Pectobacterium atrosepticum (strain SCRI 1043 / ATCC BAA-672) (Erwinia carotovora subsp. atroseptica).